The following is a 583-amino-acid chain: Protein translocase subunit SecD (583 aa).

The next 6 membrane-spanning stretches (helical) occupy residues 7–27 (FGVVLVVLAACSGFLFPTLQW), 419–439 (LVWGLCAVLLFMLVWYQEAGV), 446–468 (LLNLYIMFGVLSAFNLTLTLSSI), 469–489 (AGMILTIGMAVDANVVVFERI), 511–531 (FWAIMDSNVTTFIAALFLSVL), and 538–558 (GFAYSLAIGVVSSVFTALFVS).

The protein belongs to the SecD/SecF family. SecD subfamily. Forms a complex with SecF. Part of the essential Sec protein translocation apparatus which comprises SecA, SecYEG and auxiliary proteins SecDF. Other proteins may also be involved.

It is found in the cell inner membrane. Functionally, part of the Sec protein translocase complex. Interacts with the SecYEG preprotein conducting channel. SecDF uses the proton motive force (PMF) to complete protein translocation after the ATP-dependent function of SecA. This is Protein translocase subunit SecD from Treponema pallidum (strain Nichols).